The chain runs to 32 residues: MTLISDSQIVVALVSAFVTGILALRLGRELYR.

The helical transmembrane segment at Val10–Gly27 threads the bilayer.

This sequence belongs to the PsaM family.

It is found in the plastid. Its subcellular location is the chloroplast thylakoid membrane. This chain is Photosystem I reaction center subunit XII, found in Staurastrum punctulatum (Green alga).